The primary structure comprises 154 residues: Probable prefoldin subunit 5 (154 aa).

The protein belongs to the prefoldin subunit alpha family. In terms of assembly, heterohexamer of two PFD-alpha type and four PFD-beta type subunits. Interacts with byr1.

It localises to the cytoplasm. Binds specifically to cytosolic chaperonin (c-CPN) and transfers target proteins to it. Binds to nascent polypeptide chain and promotes folding in an environment in which there are many competing pathways for nonnative proteins. Required for normal cytoskeletal function and when bound to byr1, is involved in the regulation of sexual differentiation. The chain is Probable prefoldin subunit 5 (bob1) from Schizosaccharomyces pombe (strain 972 / ATCC 24843) (Fission yeast).